Reading from the N-terminus, the 461-residue chain is CBL-interacting protein kinase 5 (461 aa).

The region spanning 12 to 266 (YELGRMLGQG…VEKLVEHPWF (255 aa)) is the Protein kinase domain. ATP is bound by residues 18-26 (LGQGTFAKV) and Lys41. Residue Asp134 is the Proton acceptor of the active site. The segment at 152–181 (DFGLSAFKECQKQDGLLHTTCGTPAYVAPE) is activation loop. Residues 300–334 (EGKAKEPASSLKPVSLNAFDIISLSKGFDLSGLFE) enclose the NAF domain. The PPI stretch occupies residues 340-369 (KADSRFMTQKPASAIVSKLEQIAETESFKV). The tract at residues 440-461 (HPSLAQSSTLTQSSKSISRHAI) is disordered. Residues 442–455 (SLAQSSTLTQSSKS) show a composition bias toward low complexity.

This sequence belongs to the protein kinase superfamily. CAMK Ser/Thr protein kinase family. SNF1 subfamily. Mn(2+) serves as cofactor.

It catalyses the reaction L-seryl-[protein] + ATP = O-phospho-L-seryl-[protein] + ADP + H(+). The enzyme catalyses L-threonyl-[protein] + ATP = O-phospho-L-threonyl-[protein] + ADP + H(+). In terms of biological role, CIPK serine-threonine protein kinases interact with CBL proteins. Binding of a CBL protein to the regulatory NAF domain of CIPK protein lead to the activation of the kinase in a calcium-dependent manner. The protein is CBL-interacting protein kinase 5 (CIPK5) of Oryza sativa subsp. japonica (Rice).